The following is a 601-amino-acid chain: Glutathione-regulated potassium-efflux system protein KefB (601 aa).

The next 13 membrane-spanning stretches (helical) occupy residues 4-24, 29-49, 55-75, 87-107, 111-131, 152-172, 177-197, 207-227, 230-250, 262-282, 284-304, 324-344, and 356-376; these read ADLLTAGVLFLFAAVAAVPLA, IGAVLGYLLAGIAIGPWGLGF, EILHFSELGVVFLMFIIGLEL, IFGVGAAQVLLSAAVLAGLLM, FLWQAAVVGGIGLAMSSTAMA, VLLFQDLAVIPALALVPLLAG, HFDWFKVAMKVLAFAVMLIGG, FIAASGVREVFTAATLLLVLS, LFMDALGLSMALGTFIAGVLL, AIDPFKGLLLGLFFISVGMSL, LGVLYTHLLWVAASVVILVVI, MQFASVLSQGGEFAFVLFSTA, and ALLLVTVTLSMMTTPLLMKGI. The RCK N-terminal domain occupies 400 to 519; sequence KPQVIVVGFG…AGVTQFSRET (120 aa).

Belongs to the monovalent cation:proton antiporter 2 (CPA2) transporter (TC 2.A.37) family. KefB subfamily. In terms of assembly, interacts with the regulatory subunit KefG.

The protein resides in the cell inner membrane. Functionally, pore-forming subunit of a potassium efflux system that confers protection against electrophiles. Catalyzes K(+)/H(+) antiport. The sequence is that of Glutathione-regulated potassium-efflux system protein KefB from Salmonella dublin (strain CT_02021853).